The sequence spans 338 residues: Methionyl-tRNA formyltransferase (338 aa).

Residue 110–113 coordinates (6S)-5,6,7,8-tetrahydrofolate; that stretch reads SLLP.

The protein belongs to the Fmt family.

It carries out the reaction L-methionyl-tRNA(fMet) + (6R)-10-formyltetrahydrofolate = N-formyl-L-methionyl-tRNA(fMet) + (6S)-5,6,7,8-tetrahydrofolate + H(+). Its function is as follows. Attaches a formyl group to the free amino group of methionyl-tRNA(fMet). The formyl group appears to play a dual role in the initiator identity of N-formylmethionyl-tRNA by promoting its recognition by IF2 and preventing the misappropriation of this tRNA by the elongation apparatus. The protein is Methionyl-tRNA formyltransferase of Synechococcus sp. (strain CC9605).